A 287-amino-acid polypeptide reads, in one-letter code: ATP synthase gamma chain (287 aa).

This sequence belongs to the ATPase gamma chain family. As to quaternary structure, F-type ATPases have 2 components, CF(1) - the catalytic core - and CF(0) - the membrane proton channel. CF(1) has five subunits: alpha(3), beta(3), gamma(1), delta(1), epsilon(1). CF(0) has three main subunits: a, b and c.

The protein resides in the cell inner membrane. In terms of biological role, produces ATP from ADP in the presence of a proton gradient across the membrane. The gamma chain is believed to be important in regulating ATPase activity and the flow of protons through the CF(0) complex. The sequence is that of ATP synthase gamma chain from Xanthomonas campestris pv. campestris (strain B100).